A 129-amino-acid polypeptide reads, in one-letter code: Small ribosomal subunit protein uS12 (129 aa).

D89 carries the post-translational modification 3-methylthioaspartic acid. Positions 110–129 (RKQGRSRYGAPRKQVVATKK) are disordered.

Belongs to the universal ribosomal protein uS12 family. Part of the 30S ribosomal subunit. Contacts proteins S8 and S17. May interact with IF1 in the 30S initiation complex.

Functionally, with S4 and S5 plays an important role in translational accuracy. Interacts with and stabilizes bases of the 16S rRNA that are involved in tRNA selection in the A site and with the mRNA backbone. Located at the interface of the 30S and 50S subunits, it traverses the body of the 30S subunit contacting proteins on the other side and probably holding the rRNA structure together. The combined cluster of proteins S8, S12 and S17 appears to hold together the shoulder and platform of the 30S subunit. The sequence is that of Small ribosomal subunit protein uS12 from Rickettsia bellii (strain RML369-C).